A 174-amino-acid polypeptide reads, in one-letter code: Streptothricin acetyltransferase (174 aa).

The N-acetyltransferase domain maps to 20 to 170 (FIVREVFDVH…AMYWYWFSGA (151 aa)).

Belongs to the acetyltransferase family. GNAT subfamily.

It carries out the reaction streptothricin F + acetyl-CoA = N(beta)-acetylstreptothricin F + CoA + H(+). Its function is as follows. Involved in resistance to streptothricin, a broad-spectrum antibiotic produced by streptomycetes. Detoxifies streptothricin via acetylation of the beta amino group of the first beta-lysyl moiety of streptothricin. The sequence is that of Streptothricin acetyltransferase (sat-1) from Escherichia coli.